A 243-amino-acid polypeptide reads, in one-letter code: 23S rRNA (guanosine-2'-O-)-methyltransferase RlmB (243 aa).

Glycine 196, isoleucine 216, and leucine 225 together coordinate S-adenosyl-L-methionine.

It belongs to the class IV-like SAM-binding methyltransferase superfamily. RNA methyltransferase TrmH family. RlmB subfamily. Homodimer.

Its subcellular location is the cytoplasm. The enzyme catalyses guanosine(2251) in 23S rRNA + S-adenosyl-L-methionine = 2'-O-methylguanosine(2251) in 23S rRNA + S-adenosyl-L-homocysteine + H(+). Specifically methylates the ribose of guanosine 2251 in 23S rRNA. This Salmonella typhi protein is 23S rRNA (guanosine-2'-O-)-methyltransferase RlmB.